Consider the following 335-residue polypeptide: Probable cytosolic iron-sulfur protein assembly protein Ciao1 (335 aa).

WD repeat units lie at residues Gly-12–Lys-51, Gly-57–Asn-96, Gly-101–Cys-140, Pro-146–Asp-185, Ser-192–Gly-231, Gln-250–Glu-289, and Ala-301–Asp-335.

This sequence belongs to the WD repeat CIA1 family.

Its function is as follows. Essential component of the cytosolic iron-sulfur (Fe/S) protein assembly machinery. Required for the maturation of extramitochondrial Fe/S proteins. The sequence is that of Probable cytosolic iron-sulfur protein assembly protein Ciao1 from Drosophila willistoni (Fruit fly).